Reading from the N-terminus, the 456-residue chain is Glycine--tRNA ligase (456 aa).

Substrate is bound by residues arginine 98 and glutamate 168. Residues 200–202, 210–215, 285–286, and 329–332 each bind ATP; these read RNE, FRTREF, EL, and GVER. 215–219 is a substrate binding site; that stretch reads FEQME. Substrate is bound at residue 325 to 329; that stretch reads EPSVG.

The protein belongs to the class-II aminoacyl-tRNA synthetase family. Homodimer.

Its subcellular location is the cytoplasm. The enzyme catalyses tRNA(Gly) + glycine + ATP = glycyl-tRNA(Gly) + AMP + diphosphate. Its function is as follows. Catalyzes the attachment of glycine to tRNA(Gly). In Mycoplasma capricolum subsp. capricolum (strain California kid / ATCC 27343 / NCTC 10154), this protein is Glycine--tRNA ligase.